Here is a 161-residue protein sequence, read N- to C-terminus: Large ribosomal subunit protein uL11 (161 aa).

Belongs to the universal ribosomal protein uL11 family. As to quaternary structure, part of the ribosomal stalk of the 50S ribosomal subunit. Interacts with L10 and the large rRNA to form the base of the stalk. L10 forms an elongated spine to which L12 dimers bind in a sequential fashion forming a multimeric L10(L12)X complex.

Forms part of the ribosomal stalk which helps the ribosome interact with GTP-bound translation factors. The polypeptide is Large ribosomal subunit protein uL11 (Methanosarcina mazei (strain ATCC BAA-159 / DSM 3647 / Goe1 / Go1 / JCM 11833 / OCM 88) (Methanosarcina frisia)).